A 430-amino-acid polypeptide reads, in one-letter code: Adenylosuccinate synthetase (430 aa).

GTP-binding positions include 12 to 18 (GDEGKGK) and 40 to 42 (GHT). The active-site Proton acceptor is aspartate 13. Residues aspartate 13 and glycine 40 each contribute to the Mg(2+) site. IMP contacts are provided by residues 13–16 (DEGK), 38–41 (NAGH), threonine 130, arginine 144, glutamine 224, threonine 239, and arginine 303. Residue histidine 41 is the Proton donor of the active site. Residue 299–305 (ATTGRPR) participates in substrate binding. GTP contacts are provided by residues arginine 305, 331–333 (KLD), and 413–415 (SVG).

It belongs to the adenylosuccinate synthetase family. In terms of assembly, homodimer. Mg(2+) is required as a cofactor.

It is found in the cytoplasm. The catalysed reaction is IMP + L-aspartate + GTP = N(6)-(1,2-dicarboxyethyl)-AMP + GDP + phosphate + 2 H(+). It participates in purine metabolism; AMP biosynthesis via de novo pathway; AMP from IMP: step 1/2. Functionally, plays an important role in the de novo pathway of purine nucleotide biosynthesis. Catalyzes the first committed step in the biosynthesis of AMP from IMP. This Trichlorobacter lovleyi (strain ATCC BAA-1151 / DSM 17278 / SZ) (Geobacter lovleyi) protein is Adenylosuccinate synthetase.